The chain runs to 201 residues: UPF0098 protein MT1961 (201 aa).

Positions 125-146 (TADGETPGGGISLPNSSGQPAY) are disordered.

The protein belongs to the UPF0098 family.

This is UPF0098 protein MT1961 from Mycobacterium tuberculosis (strain CDC 1551 / Oshkosh).